The chain runs to 443 residues: Ribosomal protein uS12 methylthiotransferase RimO (443 aa).

An MTTase N-terminal domain is found at 8–118 (PKVGFVSLGC…VVNAVHEVVP (111 aa)). [4Fe-4S] cluster is bound by residues Cys17, Cys53, Cys82, Cys151, Cys155, and Cys158. One can recognise a Radical SAM core domain in the interval 137–375 (LTPRHYAYLK…MAHQQAISTA (239 aa)). Residues 378–443 (QLRIGKEIEV…DEYDMWAEPI (66 aa)) enclose the TRAM domain.

Belongs to the methylthiotransferase family. RimO subfamily. [4Fe-4S] cluster serves as cofactor.

It is found in the cytoplasm. The catalysed reaction is L-aspartate(89)-[ribosomal protein uS12]-hydrogen + (sulfur carrier)-SH + AH2 + 2 S-adenosyl-L-methionine = 3-methylsulfanyl-L-aspartate(89)-[ribosomal protein uS12]-hydrogen + (sulfur carrier)-H + 5'-deoxyadenosine + L-methionine + A + S-adenosyl-L-homocysteine + 2 H(+). Its function is as follows. Catalyzes the methylthiolation of an aspartic acid residue of ribosomal protein uS12. In Pseudomonas putida (strain GB-1), this protein is Ribosomal protein uS12 methylthiotransferase RimO.